The chain runs to 437 residues: UDP-glucuronate 4-epimerase 4 (437 aa).

Residues 30–50 (SLTKFAFFSFFLLCLISLLFL) traverse the membrane as a helical segment. Positions 56 to 76 (INPSSPSDPSRRSLRTNTYGG) are disordered. The chain crosses the membrane as a helical span at residues 96-116 (GITVLVTGAAGFVGTHVSAAL). NAD(+) is bound at residue 98–129 (TVLVTGAAGFVGTHVSAALKRRGDGVIGLDNF). Tyrosine 248 (proton acceptor) is an active-site residue.

This sequence belongs to the NAD(P)-dependent epimerase/dehydratase family. In terms of assembly, homodimer. As to expression, in roots, leaves, siliques, flowers, pollen and stems.

Its subcellular location is the golgi apparatus. The protein resides in the golgi stack membrane. The catalysed reaction is UDP-alpha-D-glucuronate = UDP-alpha-D-galacturonate. Its activity is regulated as follows. Activated by glycerol, not effected by dimethyl sulfoxide and inhibited by high concentration of monovalent salts, UDP-xylose, UDP-arabinose or UDP. Involved in the synthesis of the negatively charged monosaccharide that forms the backbone of pectic cell wall components. This chain is UDP-glucuronate 4-epimerase 4 (GAE4), found in Arabidopsis thaliana (Mouse-ear cress).